The following is a 349-amino-acid chain: MCASFSPTLDSRSRQLLRTLISCYIQNGEPIGSKTLAQQAGLDISPATIRNILADLEELGLLNSPHTSAGRVPTAHGYRMFVDSLVQMQPPSEDDIRRLRVEMTGGGTQTLLGSASEILSAMTHFVGVVSAPRREQFVFRHIDFVPLDARQIMAILIFADNEVQNRVIEPRRVYEPGELERVSNYLNAHFIGRTLADIRTTVLCELRKAKDEMEQLLAHSLDLASQMLVPNDSEDIVVTGQTRLMALQDLSDMDRLRELFEIFASKREILQLLERTIDAPGVRIFIGEETGMVSMEDISLVTAPYAAHGQVLGVLGVIGPKRMAYDRVIPLVQVVAQVLGTALEPPTMP.

It belongs to the HrcA family.

Functionally, negative regulator of class I heat shock genes (grpE-dnaK-dnaJ and groELS operons). Prevents heat-shock induction of these operons. In Xylella fastidiosa (strain M23), this protein is Heat-inducible transcription repressor HrcA.